A 130-amino-acid chain; its full sequence is MNFIFLWAALGGAIGSSLRYFVGKMMPSKFLMFESFPLGTFSVNVIGCFVIGFMGHLAVKKVFGDDFGIFFVTGVLGGFTTFSSYGLDTLKLLQKSQYIEAVSYALGTNILGLIGVAIGWFLAKNFVGIN.

4 helical membrane passes run 3–23 (FIFL…YFVG), 39–59 (GTFS…HLAV), 67–87 (FGIF…SYGL), and 102–122 (VSYA…GWFL). Na(+) is bound by residues glycine 77 and threonine 80.

The protein belongs to the fluoride channel Fluc/FEX (TC 1.A.43) family.

Its subcellular location is the cell inner membrane. The enzyme catalyses fluoride(in) = fluoride(out). With respect to regulation, na(+) is not transported, but it plays an essential structural role and its presence is essential for fluoride channel function. Its function is as follows. Fluoride-specific ion channel. Important for reducing fluoride concentration in the cell, thus reducing its toxicity. The protein is Fluoride-specific ion channel FluC of Helicobacter pylori (strain Shi470).